An 89-amino-acid chain; its full sequence is Small ribosomal subunit protein uS15 (89 aa).

Belongs to the universal ribosomal protein uS15 family. As to quaternary structure, part of the 30S ribosomal subunit. Forms a bridge to the 50S subunit in the 70S ribosome, contacting the 23S rRNA.

One of the primary rRNA binding proteins, it binds directly to 16S rRNA where it helps nucleate assembly of the platform of the 30S subunit by binding and bridging several RNA helices of the 16S rRNA. In terms of biological role, forms an intersubunit bridge (bridge B4) with the 23S rRNA of the 50S subunit in the ribosome. This Salmonella schwarzengrund (strain CVM19633) protein is Small ribosomal subunit protein uS15.